An 85-amino-acid chain; its full sequence is Small ribosomal subunit protein bS16 (85 aa).

This sequence belongs to the bacterial ribosomal protein bS16 family.

The chain is Small ribosomal subunit protein bS16 from Pseudomonas savastanoi pv. phaseolicola (strain 1448A / Race 6) (Pseudomonas syringae pv. phaseolicola (strain 1448A / Race 6)).